A 614-amino-acid polypeptide reads, in one-letter code: ATP-dependent RNA helicase dbp-3 (614 aa).

Residues methionine 1–asparagine 138 are disordered. Residues arginine 9–lysine 36 are compositionally biased toward basic and acidic residues. Basic residues-rich tracts occupy residues glutamate 37–lysine 58 and lysine 91–lysine 109. Low complexity predominate over residues glutamate 117–asparagine 138. The Q motif motif lies at methionine 180–serine 207. Residues tryptophan 210–valine 394 form the Helicase ATP-binding domain. Alanine 223–threonine 230 serves as a coordination point for ATP. A DEAD box motif is present at residues aspartate 340–aspartate 343. The Helicase C-terminal domain maps to arginine 435–glycine 584.

This sequence belongs to the DEAD box helicase family. DDX5/DBP2 subfamily.

The protein resides in the nucleus. Its subcellular location is the nucleolus. It catalyses the reaction ATP + H2O = ADP + phosphate + H(+). Functionally, ATP-dependent RNA helicase required for 60S ribosomal subunit synthesis. Involved in efficient pre-rRNA processing, predominantly at site A3, which is necessary for the normal formation of 25S and 5.8S rRNAs. The polypeptide is ATP-dependent RNA helicase dbp-3 (dbp-3) (Neurospora crassa (strain ATCC 24698 / 74-OR23-1A / CBS 708.71 / DSM 1257 / FGSC 987)).